Reading from the N-terminus, the 224-residue chain is 7-cyano-7-deazaguanine synthase (224 aa).

8-18 lines the ATP pocket; the sequence is LSGGMDSAAVI. Zn(2+)-binding residues include C186, C196, C199, and C202.

It belongs to the QueC family. Requires Zn(2+) as cofactor.

The catalysed reaction is 7-carboxy-7-deazaguanine + NH4(+) + ATP = 7-cyano-7-deazaguanine + ADP + phosphate + H2O + H(+). It functions in the pathway purine metabolism; 7-cyano-7-deazaguanine biosynthesis. Its function is as follows. Catalyzes the ATP-dependent conversion of 7-carboxy-7-deazaguanine (CDG) to 7-cyano-7-deazaguanine (preQ(0)). This Xanthomonas euvesicatoria pv. vesicatoria (strain 85-10) (Xanthomonas campestris pv. vesicatoria) protein is 7-cyano-7-deazaguanine synthase.